We begin with the raw amino-acid sequence, 577 residues long: Myb-like protein N (577 aa).

Disordered stretches follow at residues 1 to 23 (MMTINNNNLNNSNNINNNNNIYT), 206 to 225 (TPFSLQCPNSPNSTSSSPLN), and 240 to 264 (SSSSSASSSSTSSQPPSPQTLLSSS). Residues 213-225 (PNSPNSTSSSPLN) are compositionally biased toward low complexity. 2 consecutive HTH myb-type domains span residues 403-465 (KKST…CPAI) and 466-517 (RKGS…SREV). DNA-binding regions (H-T-H motif) lie at residues 437 to 461 (WKKIALQIGGGKTGAQCAQHWKRVL) and 489 to 513 (WKNVASEIRTRTDIQCRYQYFKSCM). One can recognise a Myb-like domain in the interval 518–570 (PWTPKEDEILQKKVIENKQDSTKEIGWMDLSKAMARARQTKIPRTALECKIRF).

The protein resides in the nucleus. This chain is Myb-like protein N (mybN), found in Dictyostelium discoideum (Social amoeba).